The sequence spans 320 residues: Probable cell division protein WhiA (320 aa).

The segment at residues Thr-282–Glu-315 is a DNA-binding region (H-T-H motif).

It belongs to the WhiA family.

Functionally, involved in cell division and chromosome segregation. This is Probable cell division protein WhiA from Alkaliphilus oremlandii (strain OhILAs) (Clostridium oremlandii (strain OhILAs)).